A 362-amino-acid polypeptide reads, in one-letter code: Phospho-N-acetylmuramoyl-pentapeptide-transferase (362 aa).

Helical transmembrane passes span 21–41, 75–95, 100–120, 136–156, 170–190, 201–221, 225–245, 247–267, 290–310, and 339–359; these read YITF…FLLG, TMGG…WADL, VWAV…DDFL, LVVQ…LMPG, LMIP…MGAS, GLAI…AYLV, IFSH…AVFC, ALIG…AVFM, IVLA…IVQV, and TVVI…LATL.

This sequence belongs to the glycosyltransferase 4 family. MraY subfamily. It depends on Mg(2+) as a cofactor.

The protein resides in the cell inner membrane. The enzyme catalyses UDP-N-acetyl-alpha-D-muramoyl-L-alanyl-gamma-D-glutamyl-meso-2,6-diaminopimeloyl-D-alanyl-D-alanine + di-trans,octa-cis-undecaprenyl phosphate = di-trans,octa-cis-undecaprenyl diphospho-N-acetyl-alpha-D-muramoyl-L-alanyl-D-glutamyl-meso-2,6-diaminopimeloyl-D-alanyl-D-alanine + UMP. It participates in cell wall biogenesis; peptidoglycan biosynthesis. Functionally, catalyzes the initial step of the lipid cycle reactions in the biosynthesis of the cell wall peptidoglycan: transfers peptidoglycan precursor phospho-MurNAc-pentapeptide from UDP-MurNAc-pentapeptide onto the lipid carrier undecaprenyl phosphate, yielding undecaprenyl-pyrophosphoryl-MurNAc-pentapeptide, known as lipid I. This chain is Phospho-N-acetylmuramoyl-pentapeptide-transferase, found in Acidiphilium cryptum (strain JF-5).